We begin with the raw amino-acid sequence, 297 residues long: UDP-3-O-acyl-N-acetylglucosamine deacetylase (297 aa).

Positions 79, 238, and 242 each coordinate Zn(2+). Histidine 265 (proton donor) is an active-site residue.

This sequence belongs to the LpxC family. Requires Zn(2+) as cofactor.

It catalyses the reaction a UDP-3-O-[(3R)-3-hydroxyacyl]-N-acetyl-alpha-D-glucosamine + H2O = a UDP-3-O-[(3R)-3-hydroxyacyl]-alpha-D-glucosamine + acetate. It participates in glycolipid biosynthesis; lipid IV(A) biosynthesis; lipid IV(A) from (3R)-3-hydroxytetradecanoyl-[acyl-carrier-protein] and UDP-N-acetyl-alpha-D-glucosamine: step 2/6. In terms of biological role, catalyzes the hydrolysis of UDP-3-O-myristoyl-N-acetylglucosamine to form UDP-3-O-myristoylglucosamine and acetate, the committed step in lipid A biosynthesis. This Blochmanniella pennsylvanica (strain BPEN) protein is UDP-3-O-acyl-N-acetylglucosamine deacetylase.